The following is a 1412-amino-acid chain: DNA-directed RNA polymerase subunit beta' (1412 aa).

Cys70, Cys72, Cys85, and Cys88 together coordinate Zn(2+). Mg(2+)-binding residues include Asp460, Asp462, and Asp464. Zn(2+) contacts are provided by Cys819, Cys893, Cys900, and Cys903. Positions 1392–1412 (EEAFEFGTPSAPAEEPQHPAE) are disordered.

The protein belongs to the RNA polymerase beta' chain family. The RNAP catalytic core consists of 2 alpha, 1 beta, 1 beta' and 1 omega subunit. When a sigma factor is associated with the core the holoenzyme is formed, which can initiate transcription. It depends on Mg(2+) as a cofactor. Zn(2+) is required as a cofactor.

It catalyses the reaction RNA(n) + a ribonucleoside 5'-triphosphate = RNA(n+1) + diphosphate. In terms of biological role, DNA-dependent RNA polymerase catalyzes the transcription of DNA into RNA using the four ribonucleoside triphosphates as substrates. This is DNA-directed RNA polymerase subunit beta' from Burkholderia mallei (strain NCTC 10247).